Here is a 147-residue protein sequence, read N- to C-terminus: Phospholipase A2-beta (147 aa).

The N-terminal stretch at Met-1–Ser-28 is a signal peptide. 6 disulfides stabilise this stretch: Cys-31–Cys-58, Cys-35–Cys-64, Cys-40–Cys-117, Cys-51–Cys-71, Cys-70–Cys-95, and Cys-77–Cys-88. The Ca(2+) site is built by Tyr-50, Gly-52, and His-55. The active site involves His-74. Asp-75 contacts Ca(2+). Positions Lys-144–Leu-147 match the Prevents secretion from ER motif.

Belongs to the phospholipase A2 family. Ca(2+) is required as a cofactor. In terms of tissue distribution, ubiquitous but expressed at a low level. Detected in vascular tissues and in the guard cells. Predominantly detected in pollen.

The protein localises to the secreted. Its subcellular location is the endoplasmic reticulum. It carries out the reaction a 1,2-diacyl-sn-glycero-3-phosphocholine + H2O = a 1-acyl-sn-glycero-3-phosphocholine + a fatty acid + H(+). With respect to regulation, inhibited by aristolochic acid. PA2 catalyzes the calcium-dependent hydrolysis of the 2-acyl groups in 3-sn-phosphoglycerides. Releases lysophospholipids (LPLs) and free fatty acids (FFAs) from membrane phospholipids in response to hormones and other external stimuli. Regulates the process of cell elongation and plays important roles in shoot gravitropism by mediating auxin-induced cell elongation. Involved in stomatal opening in response to light. Plays a role in pollen development and germination and tube growth. The protein is Phospholipase A2-beta (PLA2-BETA) of Arabidopsis thaliana (Mouse-ear cress).